The sequence spans 1374 residues: Alpha,alpha-trehalose-phosphate synthase [UDP-forming] 1 (1374 aa).

3 disordered regions span residues 28-66 (DTGK…SDKD), 86-117 (YTPG…DDEG), and 1352-1374 (KADS…SKQQ). 2 stretches are compositionally biased toward basic and acidic residues: residues 56–66 (DPFDRPKSDKD) and 86–95 (YTPGKEKGVD). Composition is skewed to acidic residues over residues 96–109 (QDES…EDHD) and 1356–1368 (YYDD…DQED).

The protein in the N-terminal section; belongs to the glycosyltransferase 20 family. This sequence in the C-terminal section; belongs to the gob-1 trehalose phosphatase family.

The enzyme catalyses D-glucose 6-phosphate + UDP-alpha-D-glucose = alpha,alpha-trehalose 6-phosphate + UDP + H(+). Catalyzes the production of trehalose from glucose-6-phosphate and UDP-alpha-D-glucose in a 2 step process. The sequence is that of Alpha,alpha-trehalose-phosphate synthase [UDP-forming] 1 (tps-1) from Caenorhabditis briggsae.